The following is a 252-amino-acid chain: CLAVATA3/ESR (CLE)-related protein 4A-2 (252 aa).

The N-terminal stretch at 1–21 (MAKNAMLCLLILRVVLALAFA) is a signal peptide. A required for secretion from the host cytoplasm to the host apoplasm region spans residues 21–83 (ATNKKGDEEP…SNQLPNNNWM (63 aa)). An N-linked (GlcNAc...) asparagine glycan is attached at Asn32. A disordered region spans residues 116-252 (RKTGMHSQRH…APAGPDPIHH (137 aa)). 4 stretches are compositionally biased toward basic and acidic residues: residues 125-137 (HHEE…EKRV), 144-179 (PIHH…EKRV), 186-200 (PIHH…EKRA), and 207-242 (PTHH…EKRG). One copy of the A-1 repeat lies at 127-135 (EETTLEQEK). The segment at 127 to 219 (EETTLEQEKR…HEETTLEQEK (93 aa)) is 6 X approximate repeat A. Residues 136-147 (RVAGAGPDPIHH) form a CLE-1 repeat. The segment at 136–252 (RVAGAGPDPI…APAGPDPIHH (117 aa)) is 6 X approximate repeat CLE. An A-2 repeat occupies 148–156 (QDTTLEQEK). One copy of the CLE-2 repeat lies at 157–168 (RAVPAGPDPKHH). The A-3 repeat unit spans residues 169-177 (EETTLEQEK). Residues 178–189 (RVAGAGPDPIHH) form a CLE-3 repeat. One copy of the A-4 repeat lies at 190-198 (QDTTLEQEK). The CLE-4 repeat unit spans residues 199–210 (RAVPAGPDPTHH). The A-5 repeat unit spans residues 211–219 (EETTLEQEK). The stretch at 220 to 231 (RAVPAGPDPKHH) is one CLE-5 repeat. The A-6 repeat unit spans residues 232–240 (EETTFEQEK). Residues 241–252 (RGAPAGPDPIHH) form a CLE-6 repeat.

Belongs to the CLV3/ESR signal peptide family. Highly expressed exclusively within the dorsal esophageal gland cell during syncytium formation in host plants.

The protein resides in the secreted. It localises to the host cytoplasm. Its subcellular location is the host extracellular space. The protein localises to the extracellular space. It is found in the apoplast. In terms of biological role, mimics host plant CLE extracellular signal peptides that regulate cell fate. May play a role in the differentiation or division of feeding cells (syncytia) induced in plant roots during infection. This is CLAVATA3/ESR (CLE)-related protein 4A-2 (CLE-4A-2) from Globodera rostochiensis (Golden nematode worm).